A 98-amino-acid chain; its full sequence is NADH-ubiquinone oxidoreductase chain 4L (98 aa).

The next 3 membrane-spanning stretches (helical) occupy residues 1-21 (MTSI…GVLM), 28-48 (STLL…SLLI), and 59-79 (APLI…ALLV).

The protein belongs to the complex I subunit 4L family. As to quaternary structure, core subunit of respiratory chain NADH dehydrogenase (Complex I) which is composed of 45 different subunits.

It is found in the mitochondrion inner membrane. It carries out the reaction a ubiquinone + NADH + 5 H(+)(in) = a ubiquinol + NAD(+) + 4 H(+)(out). Core subunit of the mitochondrial membrane respiratory chain NADH dehydrogenase (Complex I) which catalyzes electron transfer from NADH through the respiratory chain, using ubiquinone as an electron acceptor. Part of the enzyme membrane arm which is embedded in the lipid bilayer and involved in proton translocation. This chain is NADH-ubiquinone oxidoreductase chain 4L (MT-ND4L), found in Phascolarctos cinereus (Koala).